Reading from the N-terminus, the 143-residue chain is Large ribosomal subunit protein uL16 (143 aa).

Basic residues predominate over residues 1–17 (MLQPKRTKFRKAHKGRI). The disordered stretch occupies residues 1-21 (MLQPKRTKFRKAHKGRIHGNA).

It belongs to the universal ribosomal protein uL16 family. In terms of assembly, part of the 50S ribosomal subunit.

Functionally, binds 23S rRNA and is also seen to make contacts with the A and possibly P site tRNAs. The sequence is that of Large ribosomal subunit protein uL16 from Rhizorhabdus wittichii (strain DSM 6014 / CCUG 31198 / JCM 15750 / NBRC 105917 / EY 4224 / RW1) (Sphingomonas wittichii).